Reading from the N-terminus, the 266-residue chain is Indole-3-glycerol phosphate synthase (266 aa).

The protein belongs to the TrpC family.

The catalysed reaction is 1-(2-carboxyphenylamino)-1-deoxy-D-ribulose 5-phosphate + H(+) = (1S,2R)-1-C-(indol-3-yl)glycerol 3-phosphate + CO2 + H2O. The protein operates within amino-acid biosynthesis; L-tryptophan biosynthesis; L-tryptophan from chorismate: step 4/5. This is Indole-3-glycerol phosphate synthase from Janthinobacterium sp. (strain Marseille) (Minibacterium massiliensis).